Here is a 521-residue protein sequence, read N- to C-terminus: CDP-diacylglycerol--glycerol-3-phosphate 3-phosphatidyltransferase (521 aa).

ATP is bound at residue 91–98 (ASLYLGKS). 2 consecutive PLD phosphodiesterase domains span residues 177–203 (GLGL…SNDY) and 419–457 (NGWS…TRRA). Residues histidine 182, lysine 184, and aspartate 189 contribute to the active site.

This sequence belongs to the CDP-alcohol phosphatidyltransferase class-II family.

It is found in the mitochondrion. The catalysed reaction is a CDP-1,2-diacyl-sn-glycerol + sn-glycerol 3-phosphate = a 1,2-diacyl-sn-glycero-3-phospho-(1'-sn-glycero-3'-phosphate) + CMP + H(+). Its pathway is phospholipid metabolism; phosphatidylglycerol biosynthesis; phosphatidylglycerol from CDP-diacylglycerol: step 1/2. Functionally, essential for the viability of mitochondrial petite mutant. Catalyzes the committed step to the synthesis of the acidic phospholipids. The sequence is that of CDP-diacylglycerol--glycerol-3-phosphate 3-phosphatidyltransferase (PGS1) from Saccharomyces cerevisiae (strain ATCC 204508 / S288c) (Baker's yeast).